Consider the following 212-residue polypeptide: Ribonuclease HII (212 aa).

The region spanning 1–199 (MIGGIDEAGR…VGGRIGLGRN (199 aa)) is the RNase H type-2 domain. Residues aspartate 6, glutamate 7, and aspartate 101 each coordinate a divalent metal cation.

This sequence belongs to the RNase HII family. It depends on Mn(2+) as a cofactor. Mg(2+) is required as a cofactor.

Its subcellular location is the cytoplasm. The enzyme catalyses Endonucleolytic cleavage to 5'-phosphomonoester.. Functionally, endonuclease that specifically degrades the RNA of RNA-DNA hybrids. The sequence is that of Ribonuclease HII from Pyrobaculum aerophilum (strain ATCC 51768 / DSM 7523 / JCM 9630 / CIP 104966 / NBRC 100827 / IM2).